The chain runs to 345 residues: MTIAGRNKVVAFSIVLSALLCSISLLQAAFVLSGGSLPQLAVARVPPLLHTTGRAFMHVLTFLLPEAAARSLAAVSTAPSNSSTLVAILGTGLSAPLLLTYLLRRFEKTHAVEISYFSLFLCALNFEGVRLFLPILYTGTLTTYAGNVPMQIVMFFRSLALLALFASGIFAKKTLTRQEGAVVFVLCTVAFLISRYTTIHTIHAYRPSQSTQGAILLAQPISESGSIIDSTGEEKTLKVRSSAHRKTRILVTPQRNFTFYYGSHAWHRWFFWTTAVLSALSYGVLGHTLQISHYYIAAAALPFVIAGYRLLTHGLTWSACIVGLFLLNTASVFFIRSVHRVHIWQ.

The next 8 membrane-spanning stretches (helical) occupy residues Val-9 to Val-31, Thr-84 to Leu-103, Tyr-116 to Thr-138, Val-148 to Phe-170, Val-182 to Ala-204, Trp-269 to Gly-286, Ile-291 to Tyr-308, and His-313 to Ile-335.

The protein resides in the cell membrane. This is an uncharacterized protein from Treponema pallidum (strain Nichols).